The primary structure comprises 780 residues: WD repeat-containing protein 27 (780 aa).

WD repeat units follow at residues 3-56 (TPPE…VWSS), 61-100 (HQLL…MWNV), 111-150 (LTPR…VMDV), 154-193 (SVLV…VWDF), 200-236 (YSSS…IFSL), 291-335 (FPIL…LASF), 342-385 (HFKE…VLEI), 500-540 (NLSR…VFNA), 544-582 (GPPA…VWSV), 588-639 (MLLL…RYKP), 644-685 (KPIF…VFDL), 691-738 (AAVL…LWDL), and 752-779 (AFCT…LSQP).

This Mus musculus (Mouse) protein is WD repeat-containing protein 27 (Wdr27).